The following is a 103-amino-acid chain: Small ribosomal subunit protein uS10 (103 aa).

It belongs to the universal ribosomal protein uS10 family. As to quaternary structure, part of the 30S ribosomal subunit.

In terms of biological role, involved in the binding of tRNA to the ribosomes. The polypeptide is Small ribosomal subunit protein uS10 (Shewanella frigidimarina (strain NCIMB 400)).